The primary structure comprises 96 residues: Prokineticin Bm8-e (96 aa).

A signal peptide spans 1 to 19; it reads MKCFAQIVVLLLVIAFSHG. Disulfide bonds link cysteine 26/cysteine 38, cysteine 32/cysteine 50, cysteine 37/cysteine 78, cysteine 60/cysteine 86, and cysteine 80/cysteine 95.

Belongs to the AVIT (prokineticin) family. As to expression, expressed by the skin glands.

The protein localises to the secreted. Its function is as follows. Potent agonist for both PKR1/PROKR1 and PKR2/PROKR2, and inducer of a potent and long-lasting hyperalgesia. Also potentiates capsaicin-induced TRPV1 current, when tested on DRG neurons. At subnanomolar concentrations, this protein both induces potent chemotaxis of macrophages and stimulates LPS-induced production of the pro-inflammatory cytokines IL-1 and IL-12. In vivo, potently stimulates the contraction of the guinea-pig gastrointestinal (GI) smooth muscle (nanomolar concentration). The sequence is that of Prokineticin Bm8-e from Bombina maxima (Giant fire-bellied toad).